The primary structure comprises 466 residues: MSIASVASVFKGEHAVGSKVTVRGWVRTRRDSKAGISFLAVYDGSCFNPIQGVVPNSLDNYDNEVLKLTAGCSVVMTGDVVESPGAGQAFELQVTDIEVAGWVDDPDTYPMAAKRHSIEHLRELAHLRPRTNIIGAVARVRNCLSQAIHRFYHEEGFIWVSTPLITASDCEGAGEMFRVSTLDMENLPRTDAGKVDYDKDFFGKEAFLTVSGQLNAETYACALSKVYTFGPTFRAENSNTSRHLAEFWMVEPEVAFANLNDIAGLAEAMLKYAFNAVLTERMDDLTFFAQHVDKTVIDRLQSFVSSDFAQVDYTDAVEILQNCGRTFEFPVSWGIDLSSEHERYLAEEHFKAPVVVKNYPKDIKAFYMRLNDDGKTVAAMDVLAPGIGEIIGGSQREERLDVLDMRLAEMDLNQEDYWWYRDMRRYGTVPHAGFGLGFERLVSYVTGVNNIRDVIPFPRAPRTANF.

This sequence belongs to the class-II aminoacyl-tRNA synthetase family. Homodimer.

It is found in the cytoplasm. The enzyme catalyses tRNA(Asn) + L-asparagine + ATP = L-asparaginyl-tRNA(Asn) + AMP + diphosphate + H(+). The sequence is that of Asparagine--tRNA ligase from Shewanella baltica (strain OS155 / ATCC BAA-1091).